The primary structure comprises 182 residues: TATA-box-binding protein (182 aa).

2 consecutive repeat copies span residues 10–87 (VVNV…RLHL) and 102–177 (VRNI…LTRL).

This sequence belongs to the TBP family.

General factor that plays a role in the activation of archaeal genes transcribed by RNA polymerase. Binds specifically to the TATA box promoter element which lies close to the position of transcription initiation. In Cenarchaeum symbiosum (strain A), this protein is TATA-box-binding protein (tbp).